Reading from the N-terminus, the 347-residue chain is GMP reductase (347 aa).

NADP(+) is bound at residue 108-131; that stretch reads ADFAKTAQILALNPALNFVCIDVA. 2 residues coordinate K(+): Gly-181 and Gly-183. Residue Cys-186 is the Thioimidate intermediate of the active site. 216 to 239 lines the NADP(+) pocket; that stretch reads IVSDGGCTMPGDVAKAFGGGADFV.

Belongs to the IMPDH/GMPR family. GuaC type 1 subfamily. In terms of assembly, homotetramer.

It catalyses the reaction IMP + NH4(+) + NADP(+) = GMP + NADPH + 2 H(+). Functionally, catalyzes the irreversible NADPH-dependent deamination of GMP to IMP. It functions in the conversion of nucleobase, nucleoside and nucleotide derivatives of G to A nucleotides, and in maintaining the intracellular balance of A and G nucleotides. This is GMP reductase from Salmonella arizonae (strain ATCC BAA-731 / CDC346-86 / RSK2980).